A 493-amino-acid chain; its full sequence is Putative MgpC-like protein MPN_414 (493 aa).

Over residues 1 to 14 (MKPTSLPKNFTNNP) the composition is skewed to polar residues. 2 disordered regions span residues 1 to 92 (MKPT…GHNS) and 441 to 493 (KSAR…SGNH). Composition is skewed to basic and acidic residues over residues 25–34 (DNGRAYRKLN) and 44–56 (DSTK…DKDG). 2 stretches are compositionally biased toward polar residues: residues 72–92 (VSST…GHNS) and 445–472 (ENAQ…SPCR). Positions 482–493 (RVTEEERSSGNH) are enriched in basic and acidic residues.

Belongs to the MgpC family.

In Mycoplasma pneumoniae (strain ATCC 29342 / M129 / Subtype 1) (Mycoplasmoides pneumoniae), this protein is Putative MgpC-like protein MPN_414.